The chain runs to 181 residues: c-Myc-binding protein homolog (181 aa).

The segment covering glutamate 111–asparagine 127 has biased composition (low complexity). Disordered stretches follow at residues glutamate 111–isoleucine 145 and valine 159–glutamate 181. Residues proline 168–glutamate 181 are compositionally biased toward polar residues.

It belongs to the AMY1 family.

It localises to the nucleus. This is c-Myc-binding protein homolog from Drosophila melanogaster (Fruit fly).